A 382-amino-acid chain; its full sequence is Exostosin-1 homolog (382 aa).

The N-terminal stretch at 1–20 is a signal peptide; it reads MQNVMKFHLVIFMLFGSVRL. N-linked (GlcNAc...) asparagine glycosylation is present at N268.

It belongs to the glycosyltransferase 47 family. As to quaternary structure, interacts with rib-2.

It is found in the endoplasmic reticulum. The protein localises to the golgi apparatus. In terms of biological role, required for the biosynthesis of heparan sulfate by positively regulating N-acetylglucosamine transferase II (GlcNAcT-II) and glucuronyl transferase II (GlcAT-II) activities of glycosyltransferase rib-2. Probably not directly involved in chondroitin sulfate biosynthesis but negatively regulates chondroitin sulfate levels. Maternally required for normal ventral epidermal enclosure and for embryo elongation during the early stages of embryonic development. In addition, involved in the elongation of the pharyngeal isthmus and in the organization of the actin cytoskeleton in the pharyngeal muscles during the later stages embryonic development. In adults, regulates egg-laying and the normal morphogenesis of the vulva. Also involved in the directed migration of hermaphrodite-specific neurons. The polypeptide is Exostosin-1 homolog (rib-1) (Caenorhabditis elegans).